A 108-amino-acid polypeptide reads, in one-letter code: Tetrahydromethanopterin S-methyltransferase subunit B (108 aa).

A helical membrane pass occupies residues 79–99; the sequence is GMFFGFWVTMAILVLVTILAV.

It belongs to the MtrB family. As to quaternary structure, the complex is composed of 8 subunits; MtrA, MtrB, MtrC, MtrD, MtrE, MtrF, MtrG and MtrH.

The protein resides in the cell membrane. It carries out the reaction 5-methyl-5,6,7,8-tetrahydromethanopterin + coenzyme M + 2 Na(+)(in) = 5,6,7,8-tetrahydromethanopterin + methyl-coenzyme M + 2 Na(+)(out). It participates in one-carbon metabolism; methanogenesis from CO(2); methyl-coenzyme M from 5,10-methylene-5,6,7,8-tetrahydromethanopterin: step 2/2. In terms of biological role, part of a complex that catalyzes the formation of methyl-coenzyme M and tetrahydromethanopterin from coenzyme M and methyl-tetrahydromethanopterin. This is an energy-conserving, sodium-ion translocating step. This Methanococcus maripaludis (strain C7 / ATCC BAA-1331) protein is Tetrahydromethanopterin S-methyltransferase subunit B.